We begin with the raw amino-acid sequence, 57 residues long: Protein translocase subunit SecE (57 aa).

The helical transmembrane segment at 34–54 threads the bilayer; it reads AGILLIGAIGFLVFLIMGGIV.

It belongs to the SecE/SEC61-gamma family. As to quaternary structure, component of the Sec protein translocase complex. Heterotrimer consisting of SecY (alpha), SecG (beta) and SecE (gamma) subunits. The heterotrimers can form oligomers, although 1 heterotrimer is thought to be able to translocate proteins. Interacts with the ribosome. May interact with SecDF, and other proteins may be involved.

It is found in the cell membrane. Its function is as follows. Essential subunit of the Sec protein translocation channel SecYEG. Clamps together the 2 halves of SecY. May contact the channel plug during translocation. The protein is Protein translocase subunit SecE of Halobacterium salinarum (strain ATCC 29341 / DSM 671 / R1).